A 953-amino-acid polypeptide reads, in one-letter code: Isoleucine--tRNA ligase (953 aa).

A 'HIGH' region motif is present at residues 57 to 67 (PYANGDIHIGH). E582 serves as a coordination point for L-isoleucyl-5'-AMP. Positions 623–627 (KMSKS) match the 'KMSKS' region motif. Residue K626 participates in ATP binding. Zn(2+) is bound by residues C916, C919, C936, and C939.

The protein belongs to the class-I aminoacyl-tRNA synthetase family. IleS type 1 subfamily. Monomer. Zn(2+) is required as a cofactor.

Its subcellular location is the cytoplasm. The catalysed reaction is tRNA(Ile) + L-isoleucine + ATP = L-isoleucyl-tRNA(Ile) + AMP + diphosphate. In terms of biological role, catalyzes the attachment of isoleucine to tRNA(Ile). As IleRS can inadvertently accommodate and process structurally similar amino acids such as valine, to avoid such errors it has two additional distinct tRNA(Ile)-dependent editing activities. One activity is designated as 'pretransfer' editing and involves the hydrolysis of activated Val-AMP. The other activity is designated 'posttransfer' editing and involves deacylation of mischarged Val-tRNA(Ile). The chain is Isoleucine--tRNA ligase from Bordetella petrii (strain ATCC BAA-461 / DSM 12804 / CCUG 43448).